The sequence spans 261 residues: Hemin import ATP-binding protein HmuV (261 aa).

Residues 5–241 enclose the ABC transporter domain; the sequence is YTAENLTFTR…DALAHWYGAQ (237 aa). 37–44 contributes to the ATP binding site; sequence GPNGAGKS.

Belongs to the ABC transporter superfamily. Heme (hemin) importer (TC 3.A.1.14.5) family. The complex is composed of two ATP-binding proteins (HmuV), two transmembrane proteins (HmuU) and a solute-binding protein (HmuT).

The protein localises to the cell inner membrane. Part of the ABC transporter complex HmuTUV involved in hemin import. Responsible for energy coupling to the transport system. This chain is Hemin import ATP-binding protein HmuV, found in Enterobacter cloacae.